A 675-amino-acid chain; its full sequence is Methionine--tRNA ligase (675 aa).

Residues 15–25 carry the 'HIGH' region motif; the sequence is PYANGSIHLGH. Zn(2+) contacts are provided by Cys146, Cys149, Cys159, and Cys162. A 'KMSKS' region motif is present at residues 332–336; sequence KMSKS. Lys335 lines the ATP pocket. The region spanning 574-675 is the tRNA-binding domain; sequence DFAKLDLRIA…AGAKPGMRVK (102 aa).

This sequence belongs to the class-I aminoacyl-tRNA synthetase family. MetG type 1 subfamily. In terms of assembly, homodimer. Zn(2+) is required as a cofactor.

It is found in the cytoplasm. It carries out the reaction tRNA(Met) + L-methionine + ATP = L-methionyl-tRNA(Met) + AMP + diphosphate. In terms of biological role, is required not only for elongation of protein synthesis but also for the initiation of all mRNA translation through initiator tRNA(fMet) aminoacylation. The protein is Methionine--tRNA ligase of Tolumonas auensis (strain DSM 9187 / NBRC 110442 / TA 4).